A 345-amino-acid chain; its full sequence is Heat-inducible transcription repressor HrcA (345 aa).

The protein belongs to the HrcA family.

Its function is as follows. Negative regulator of class I heat shock genes (grpE-dnaK-dnaJ and groELS operons). Prevents heat-shock induction of these operons. In Lachnoclostridium phytofermentans (strain ATCC 700394 / DSM 18823 / ISDg) (Clostridium phytofermentans), this protein is Heat-inducible transcription repressor HrcA.